The following is a 306-amino-acid chain: Beta-lactamase 1 (306 aa).

A signal peptide spans 1-27 (MILKNKRMLKIGICVGILGLSITSLEA). Ser-91 acts as the Acyl-ester intermediate in catalysis. The Proton acceptor role is filled by Glu-187. 253–255 (KSG) is a substrate binding site.

The protein belongs to the class-A beta-lactamase family.

The catalysed reaction is a beta-lactam + H2O = a substituted beta-amino acid. In terms of biological role, this protein is a beta-lactamase with a substrate specificity for penicillins. The sequence is that of Beta-lactamase 1 (blaY) from Bacillus cereus.